The sequence spans 370 residues: Adaptive-response sensory kinase SasA (370 aa).

The region spanning Met-152 to Gln-365 is the Histidine kinase domain. Residue His-155 is modified to Phosphohistidine; by autocatalysis.

Homooligomerizes. Interacts with KaiC. Participates in the KaiBC complex, whose core is composed of a KaiC homohexamer and 6 KaiB.

It catalyses the reaction ATP + protein L-histidine = ADP + protein N-phospho-L-histidine.. Member of the two-component regulatory system SasA/RpaA involved in genome-wide circadian gene expression. One of several clock output pathways. Participates in the Kai clock protein complex, the main circadian regulator in cyanobacteria, via its interaction with KaiC. KaiC enhances the autophosphorylation activity of SasA, which then transfers its phosphate group to RpaA to activate it. In addition to its output function, recruits fold-shifted KaiB (KaiB(fs)) to KaiC to cooperatively form the KaiB(6):KaiC(6) complex (independent of SasA kinase activity). Required for robustness of the circadian rhythm of gene expression and is involved in clock output, also required for adaptation to light/dark cycles. The protein is Adaptive-response sensory kinase SasA of Prochlorococcus marinus (strain MIT 9303).